The chain runs to 1806 residues: Non-reducing polyketide synthase pks12 (1806 aa).

Residues 30–191 (TDTMSGMISL…TKLHLRGKVH (162 aa)) enclose the Starter acyltransferase (SAT) domain. A Ketosynthase family 3 (KS3) domain is found at 330–755 (ENAIAIVGAG…GSNSALICGE (426 aa)). Active-site for beta-ketoacyl synthase activity residues include C504, H639, and H678. Positions 860 to 1156 (LAFSGQSKQT…HNPSQHTFLG (297 aa)) are malonyl-CoA:ACP transacylase (MAT) domain. The 286-residue stretch at 862 to 1147 (FSGQSKQTIG…IIPMVKRATH (286 aa)) folds into the Malonyl-CoA:ACP transacylase (MAT) domain. The active-site For acyl/malonyl transferase activity is the S947. An N-terminal hotdog fold region spans residues 1249 to 1383 (PQTPPLKLVT…GRFSVTSHID (135 aa)). The region spanning 1249–1558 (PQTPPLKLVT…FSRFPIAKLE (310 aa)) is the PKS/mFAS DH domain. Positions 1249–1558 (PQTPPLKLVT…FSRFPIAKLE (310 aa)) are product template (PT) domain. The active-site Proton acceptor; for dehydratase activity is the H1288. The interval 1404–1558 (SERLMAGRAY…FSRFPIAKLE (155 aa)) is C-terminal hotdog fold. D1468 serves as the catalytic Proton donor; for dehydratase activity. The 78-residue stretch at 1727 to 1804 (QSKLRIRQRI…ELVDYVVISS (78 aa)) folds into the Carrier domain. Residue S1764 is modified to O-(pantetheine 4'-phosphoryl)serine.

It depends on pantetheine 4'-phosphate as a cofactor.

Its pathway is secondary metabolite biosynthesis. In terms of biological role, non-reducing polyketide synthase; part of the gene cluster that mediates the biosynthesis of mitorubrinol and mitorubrinic acid, two virulence factors that improve T.marneffei intracellular survival in macrophages. The two polyketide synthases pks12 and pks11 are probably responsible for sequential use in the biosynthesis of mitorubrinol and mitorubrinic acid. The first part of the biosynthesis is probably catalyzed by pks12, which synthesized orsellinic acid. This tetraketide is then used as a starter unit for pks11, which possesses a SAT domain, in the second part of the biosynthesis. Pks11, contains a methyltransferase domain, also served that methylates the products, using a methyl group from S-adenosylmethionine. In Talaromyces marneffei (Penicillium marneffei), this protein is Non-reducing polyketide synthase pks12.